We begin with the raw amino-acid sequence, 216 residues long: Pyrophosphatase PpaX (216 aa).

D12 (nucleophile) is an active-site residue.

The protein belongs to the HAD-like hydrolase superfamily. PpaX family. It depends on Mg(2+) as a cofactor.

It carries out the reaction diphosphate + H2O = 2 phosphate + H(+). Functionally, hydrolyzes pyrophosphate formed during P-Ser-HPr dephosphorylation by HPrK/P. Might play a role in controlling the intracellular pyrophosphate pool. The protein is Pyrophosphatase PpaX of Bacillus velezensis (strain DSM 23117 / BGSC 10A6 / LMG 26770 / FZB42) (Bacillus amyloliquefaciens subsp. plantarum).